Consider the following 275-residue polypeptide: tRNA-splicing endonuclease subunit SEN34 (275 aa).

Catalysis depends on residues tyrosine 209, histidine 217, and lysine 250.

Belongs to the tRNA-intron endonuclease family. In terms of assembly, heterotetramer composed of SEN2, SEN15, SEN34 and SEN54. Interacts directly with SEN15.

The protein resides in the nucleus. It is found in the endomembrane system. The protein localises to the mitochondrion outer membrane. The catalysed reaction is pretRNA = a 3'-half-tRNA molecule with a 5'-OH end + a 5'-half-tRNA molecule with a 2',3'-cyclic phosphate end + an intron with a 2',3'-cyclic phosphate and a 5'-hydroxyl terminus.. Functionally, constitutes one of the two catalytic subunit of the tRNA-splicing endonuclease complex, a complex responsible for identification and cleavage of the splice sites in pre-tRNA. It cleaves pre-tRNA at the 5'- and 3'-splice sites to release the intron. The products are an intron and two tRNA half-molecules bearing 2',3'-cyclic phosphate and 5'-OH termini. There are no conserved sequences at the splice sites, but the intron is invariably located at the same site in the gene, placing the splice sites an invariant distance from the constant structural features of the tRNA body. It probably carries the active site for 3'-splice site cleavage. In Saccharomyces cerevisiae (strain ATCC 204508 / S288c) (Baker's yeast), this protein is tRNA-splicing endonuclease subunit SEN34 (SEN34).